The sequence spans 91 residues: Acylphosphatase (91 aa).

Positions 5–91 (RLHAIVEGEV…KGEFTSFDTY (87 aa)) constitute an Acylphosphatase-like domain. Residues R20 and N38 contribute to the active site.

This sequence belongs to the acylphosphatase family.

The catalysed reaction is an acyl phosphate + H2O = a carboxylate + phosphate + H(+). This is Acylphosphatase (acyP) from Metallosphaera sedula (strain ATCC 51363 / DSM 5348 / JCM 9185 / NBRC 15509 / TH2).